We begin with the raw amino-acid sequence, 394 residues long: Exodeoxyribonuclease 7 large subunit (394 aa).

It belongs to the XseA family. In terms of assembly, heterooligomer composed of large and small subunits.

The protein localises to the cytoplasm. The catalysed reaction is Exonucleolytic cleavage in either 5'- to 3'- or 3'- to 5'-direction to yield nucleoside 5'-phosphates.. Its function is as follows. Bidirectionally degrades single-stranded DNA into large acid-insoluble oligonucleotides, which are then degraded further into small acid-soluble oligonucleotides. The sequence is that of Exodeoxyribonuclease 7 large subunit from Thermotoga petrophila (strain ATCC BAA-488 / DSM 13995 / JCM 10881 / RKU-1).